The following is a 307-amino-acid chain: Putative F-box/LRR-repeat protein 22 (307 aa).

The span at 1–15 (MVTSSSSPPLATSQL) shows a compositional bias: polar residues. The disordered stretch occupies residues 1-26 (MVTSSSSPPLATSQLPVMKGEEKPSN). An F-box domain is found at 24-71 (PSNWAELPPDLLSSILLRLSPLEILENARKVCRSWRRVSKDPLIWRRI). LRR repeat units follow at residues 108–133 (WRFQ…RVKG), 158–183 (YCSI…KLVG), 185–210 (WSHL…HLQL), 212–237 (SNGL…DLRQ), and 244–270 (FGDL…DYNY). Positions 279–289 (IEDEKGEEEEN) are enriched in acidic residues. A disordered region spans residues 279-307 (IEDEKGEEEENYSYGSDDTEYGYRRSADF).

In Arabidopsis thaliana (Mouse-ear cress), this protein is Putative F-box/LRR-repeat protein 22 (FBL22).